The following is a 603-amino-acid chain: Arginine--tRNA ligase (603 aa).

The 'HIGH' region signature appears at 143–153 (PNIAKEMHVGH).

It belongs to the class-I aminoacyl-tRNA synthetase family. Monomer.

The protein localises to the cytoplasm. The catalysed reaction is tRNA(Arg) + L-arginine + ATP = L-arginyl-tRNA(Arg) + AMP + diphosphate. The sequence is that of Arginine--tRNA ligase from Prochlorococcus marinus (strain MIT 9211).